A 326-amino-acid polypeptide reads, in one-letter code: Probable cell division protein WhiA (326 aa).

The segment at residues 275 to 308 (SLEELGQLADPPLTKDAIAGRIRRLLAMADKRAA) is a DNA-binding region (H-T-H motif).

This sequence belongs to the WhiA family.

In terms of biological role, involved in cell division and chromosome segregation. The protein is Probable cell division protein WhiA of Thermobifida fusca (strain YX).